The chain runs to 347 residues: UDP-3-O-acylglucosamine N-acyltransferase (347 aa).

The active-site Proton acceptor is the histidine 241.

The protein belongs to the transferase hexapeptide repeat family. LpxD subfamily. Homotrimer.

It carries out the reaction a UDP-3-O-[(3R)-3-hydroxyacyl]-alpha-D-glucosamine + a (3R)-hydroxyacyl-[ACP] = a UDP-2-N,3-O-bis[(3R)-3-hydroxyacyl]-alpha-D-glucosamine + holo-[ACP] + H(+). It functions in the pathway bacterial outer membrane biogenesis; LPS lipid A biosynthesis. Its function is as follows. Catalyzes the N-acylation of UDP-3-O-acylglucosamine using 3-hydroxyacyl-ACP as the acyl donor. Is involved in the biosynthesis of lipid A, a phosphorylated glycolipid that anchors the lipopolysaccharide to the outer membrane of the cell. In Neisseria gonorrhoeae (strain NCCP11945), this protein is UDP-3-O-acylglucosamine N-acyltransferase.